The sequence spans 69 residues: Pantinin-1 (69 aa).

Positions 1–23 (MKTQFVILMITVILMQMLVQTEG) are cleaved as a signal peptide. V37 bears the Valine amide mark. The propeptide occupies 41–69 (GLNDRDQLDDLFDSDLSDADIKLLKEMFK).

It belongs to the non-disulfide-bridged peptide (NDBP) superfamily. Short antimicrobial peptide (group 4) family. In terms of tissue distribution, expressed by the venom gland.

The protein resides in the secreted. It is found in the target cell membrane. Amphipathic peptide that possesses relatively strong activities against Gram-positive bacteria and a fungus, but has very weak antimicrobial activities against Gram-negative bacteria. Also exhibits very low hemolytic activities against human erythrocytes (64 uM induce 21% of hemolysis). Minimal inhibitory concentration (MIC) are the following: 8 uM against S.aureus, 32 uM against B.magaterium, 32 uM against M.luteus, 28 uM against vancomycin-resistant Enterococci, 14 uM against methicillin-resistant S.aureus, 62 uM against E.coli, &gt;87 uM against P.putida, &gt;87 uM against K.oxytoca, 76 uM against E.cloacae, 72 uM against S.enterica and 16 uM against the fungus C.tropicalis. This is Pantinin-1 from Pandinus imperator (Emperor scorpion).